A 346-amino-acid polypeptide reads, in one-letter code: N-acetyl-gamma-glutamyl-phosphate reductase (346 aa).

The active site involves C149.

It belongs to the NAGSA dehydrogenase family. Type 1 subfamily.

It localises to the cytoplasm. It catalyses the reaction N-acetyl-L-glutamate 5-semialdehyde + phosphate + NADP(+) = N-acetyl-L-glutamyl 5-phosphate + NADPH + H(+). It functions in the pathway amino-acid biosynthesis; L-arginine biosynthesis; N(2)-acetyl-L-ornithine from L-glutamate: step 3/4. Its function is as follows. Catalyzes the NADPH-dependent reduction of N-acetyl-5-glutamyl phosphate to yield N-acetyl-L-glutamate 5-semialdehyde. The protein is N-acetyl-gamma-glutamyl-phosphate reductase of Citrifermentans bemidjiense (strain ATCC BAA-1014 / DSM 16622 / JCM 12645 / Bem) (Geobacter bemidjiensis).